A 306-amino-acid chain; its full sequence is N-acetylmuramic acid 6-phosphate etherase (306 aa).

Residues 55 to 218 (IVPRMKKGGR…STGVMIKLGK (164 aa)) form the SIS domain. Glu-83 (proton donor) is an active-site residue. Glu-114 is an active-site residue.

This sequence belongs to the GCKR-like family. MurNAc-6-P etherase subfamily. In terms of assembly, homodimer.

It catalyses the reaction N-acetyl-D-muramate 6-phosphate + H2O = N-acetyl-D-glucosamine 6-phosphate + (R)-lactate. It functions in the pathway amino-sugar metabolism; N-acetylmuramate degradation. Its function is as follows. Specifically catalyzes the cleavage of the D-lactyl ether substituent of MurNAc 6-phosphate, producing GlcNAc 6-phosphate and D-lactate. The polypeptide is N-acetylmuramic acid 6-phosphate etherase (Caldanaerobacter subterraneus subsp. tengcongensis (strain DSM 15242 / JCM 11007 / NBRC 100824 / MB4) (Thermoanaerobacter tengcongensis)).